The chain runs to 156 residues: Ribosomal RNA large subunit methyltransferase H (156 aa).

S-adenosyl-L-methionine-binding positions include Leu73, Gly104, and 123–128; that span reads ISSMTL.

This sequence belongs to the RNA methyltransferase RlmH family. Homodimer.

It is found in the cytoplasm. It catalyses the reaction pseudouridine(1915) in 23S rRNA + S-adenosyl-L-methionine = N(3)-methylpseudouridine(1915) in 23S rRNA + S-adenosyl-L-homocysteine + H(+). Its function is as follows. Specifically methylates the pseudouridine at position 1915 (m3Psi1915) in 23S rRNA. This is Ribosomal RNA large subunit methyltransferase H from Burkholderia multivorans (strain ATCC 17616 / 249).